A 279-amino-acid polypeptide reads, in one-letter code: HTH-type transcriptional regulator HdfR (279 aa).

The region spanning Met-1–Thr-58 is the HTH lysR-type domain. A DNA-binding region (H-T-H motif) is located at residues Phe-18 to Arg-37.

Belongs to the LysR transcriptional regulatory family.

Functionally, negatively regulates the transcription of the flagellar master operon flhDC by binding to the upstream region of the operon. The sequence is that of HTH-type transcriptional regulator HdfR from Escherichia coli O6:K15:H31 (strain 536 / UPEC).